A 405-amino-acid polypeptide reads, in one-letter code: Phosphoglycerate kinase (405 aa).

Substrate-binding positions include 24 to 26 (DFN), arginine 40, 63 to 66 (HLGR), arginine 122, and arginine 162. ATP is bound by residues lysine 212, glutamate 331, and 361–364 (GGDS).

This sequence belongs to the phosphoglycerate kinase family. Monomer.

The protein resides in the cytoplasm. It catalyses the reaction (2R)-3-phosphoglycerate + ATP = (2R)-3-phospho-glyceroyl phosphate + ADP. The protein operates within carbohydrate degradation; glycolysis; pyruvate from D-glyceraldehyde 3-phosphate: step 2/5. In Corynebacterium glutamicum (strain R), this protein is Phosphoglycerate kinase.